Reading from the N-terminus, the 545-residue chain is Chaperonin GroEL (545 aa).

ATP contacts are provided by residues threonine 30–proline 33, lysine 51, aspartate 87–threonine 91, glycine 413, asparagine 477–alanine 479, and aspartate 493.

It belongs to the chaperonin (HSP60) family. As to quaternary structure, forms a cylinder of 14 subunits composed of two heptameric rings stacked back-to-back. Interacts with the co-chaperonin GroES.

The protein resides in the cytoplasm. The catalysed reaction is ATP + H2O + a folded polypeptide = ADP + phosphate + an unfolded polypeptide.. Functionally, together with its co-chaperonin GroES, plays an essential role in assisting protein folding. The GroEL-GroES system forms a nano-cage that allows encapsulation of the non-native substrate proteins and provides a physical environment optimized to promote and accelerate protein folding. The chain is Chaperonin GroEL from Pseudomonas putida (Arthrobacter siderocapsulatus).